The following is a 247-amino-acid chain: 5-oxoprolinase subunit A (247 aa).

Belongs to the LamB/PxpA family. Forms a complex composed of PxpA, PxpB and PxpC.

The enzyme catalyses 5-oxo-L-proline + ATP + 2 H2O = L-glutamate + ADP + phosphate + H(+). Its function is as follows. Catalyzes the cleavage of 5-oxoproline to form L-glutamate coupled to the hydrolysis of ATP to ADP and inorganic phosphate. The sequence is that of 5-oxoprolinase subunit A from Ralstonia pickettii (strain 12J).